Consider the following 241-residue polypeptide: MKNIDNPSEKIIIALDGMDKDDVVNLLKKIPEIVWVKVGLELFVSEGPDVLSMLREKGKKIFLDLKFHDIPTTVARACFAASQTGAEFISLHTCAGMKALKMANEAAKEGAAKVNLIPPKLLGITILTSWTRESFCNDLLINQSINQRVKHLAEIASNSGLGGCVCSPKEVQFLRESYPETFELITPGIRSLGSNINDQSRVSDASEAIKMGASKLVIGRAITQSNDSAYMFKSFCDKISI.

Substrate contacts are provided by residues Asp-16, Lys-37, 64–73 (DLKFHDIPTT), Thr-128, Arg-190, Gln-199, Gly-219, and Arg-220. Lys-66 functions as the Proton donor in the catalytic mechanism.

It belongs to the OMP decarboxylase family. Type 1 subfamily. Homodimer.

The catalysed reaction is orotidine 5'-phosphate + H(+) = UMP + CO2. The protein operates within pyrimidine metabolism; UMP biosynthesis via de novo pathway; UMP from orotate: step 2/2. In terms of biological role, catalyzes the decarboxylation of orotidine 5'-monophosphate (OMP) to uridine 5'-monophosphate (UMP). The chain is Orotidine 5'-phosphate decarboxylase from Prochlorococcus marinus (strain NATL2A).